The following is a 447-amino-acid chain: Asparagine--tRNA ligase (447 aa).

It belongs to the class-II aminoacyl-tRNA synthetase family. Homodimer.

The protein resides in the cytoplasm. The catalysed reaction is tRNA(Asn) + L-asparagine + ATP = L-asparaginyl-tRNA(Asn) + AMP + diphosphate + H(+). The sequence is that of Asparagine--tRNA ligase from Lactococcus lactis subsp. cremoris (strain MG1363).